Here is a 552-residue protein sequence, read N- to C-terminus: Oxygen-dependent choline dehydrogenase (552 aa).

7–36 serves as a coordination point for FAD; that stretch reads DYIIIGAGSAGNVLAARLTEDKDTTVLLLE. The active-site Proton acceptor is His477.

The protein belongs to the GMC oxidoreductase family. FAD serves as cofactor.

It catalyses the reaction choline + A = betaine aldehyde + AH2. The catalysed reaction is betaine aldehyde + NAD(+) + H2O = glycine betaine + NADH + 2 H(+). It functions in the pathway amine and polyamine biosynthesis; betaine biosynthesis via choline pathway; betaine aldehyde from choline (cytochrome c reductase route): step 1/1. In terms of biological role, involved in the biosynthesis of the osmoprotectant glycine betaine. Catalyzes the oxidation of choline to betaine aldehyde and betaine aldehyde to glycine betaine at the same rate. The polypeptide is Oxygen-dependent choline dehydrogenase (Acinetobacter baumannii (strain AB307-0294)).